We begin with the raw amino-acid sequence, 204 residues long: Small ribosomal subunit protein uS7 (204 aa).

At methionine 1 the chain carries N-acetylmethionine. Residue threonine 2 is modified to N-acetylthreonine; in 40S ribosomal protein S5, N-terminally processed. Threonine 14 is modified (phosphothreonine). An N6-acetyllysine; alternate modification is found at lysine 47. Residue lysine 47 forms a Glycyl lysine isopeptide (Lys-Gly) (interchain with G-Cter in SUMO2); alternate linkage. Position 142 is a phosphoserine (serine 142).

The protein belongs to the universal ribosomal protein uS7 family. As to quaternary structure, component of the small ribosomal subunit. Part of the small subunit (SSU) processome, composed of more than 70 proteins and the RNA chaperone small nucleolar RNA (snoRNA) U3.

The protein resides in the cytoplasm. It localises to the nucleus. Its subcellular location is the nucleolus. Its function is as follows. Component of the small ribosomal subunit. The ribosome is a large ribonucleoprotein complex responsible for the synthesis of proteins in the cell. Part of the small subunit (SSU) processome, first precursor of the small eukaryotic ribosomal subunit. During the assembly of the SSU processome in the nucleolus, many ribosome biogenesis factors, an RNA chaperone and ribosomal proteins associate with the nascent pre-rRNA and work in concert to generate RNA folding, modifications, rearrangements and cleavage as well as targeted degradation of pre-ribosomal RNA by the RNA exosome. The sequence is that of Small ribosomal subunit protein uS7 (RPS5) from Bos taurus (Bovine).